We begin with the raw amino-acid sequence, 275 residues long: Rhamnulose-1-phosphate aldolase (275 aa).

The active site involves Glu117. 3 residues coordinate Zn(2+): His141, His143, and His212.

The protein belongs to the aldolase class II family. RhaD subfamily. Homotetramer. It depends on Zn(2+) as a cofactor.

It localises to the cytoplasm. It catalyses the reaction L-rhamnulose 1-phosphate = (S)-lactaldehyde + dihydroxyacetone phosphate. Its pathway is carbohydrate degradation; L-rhamnose degradation; glycerone phosphate from L-rhamnose: step 3/3. Its function is as follows. Catalyzes the reversible cleavage of L-rhamnulose-1-phosphate to dihydroxyacetone phosphate (DHAP) and L-lactaldehyde. The chain is Rhamnulose-1-phosphate aldolase from Salmonella choleraesuis (strain SC-B67).